The sequence spans 398 residues: NADH-ubiquinone oxidoreductase 49 kDa subunit (398 aa).

The protein belongs to the complex I 49 kDa subunit family.

The protein resides in the mitochondrion. It carries out the reaction a ubiquinone + NADH + 5 H(+)(in) = a ubiquinol + NAD(+) + 4 H(+)(out). In terms of biological role, core subunit of the mitochondrial membrane respiratory chain NADH dehydrogenase (Complex I) that is believed to belong to the minimal assembly required for catalysis. Complex I functions in the transfer of electrons from NADH to the respiratory chain. The immediate electron acceptor for the enzyme is believed to be ubiquinone. Component of the iron-sulfur (IP) fragment of the enzyme. Component of the iron-sulfur (IP) fragment of the enzyme. This chain is NADH-ubiquinone oxidoreductase 49 kDa subunit (NAD7), found in Cafeteria roenbergensis (Marine flagellate).